Here is a 788-residue protein sequence, read N- to C-terminus: Mediator of RNA polymerase II transcription subunit 15 (788 aa).

An interaction with SREBF1 region spans residues 9-73 (DWRSTAFRQK…IHFRDIHNKK (65 aa)). Disordered stretches follow at residues 95 to 139 (GAAG…MAPH) and 260 to 329 (QQQA…PLVS). A compositionally biased stretch (gly residues) spans 108 to 117 (QSLGGMGSLG). Low complexity predominate over residues 260–269 (QQQALQAQPP). Positions 270-284 (IQQPPMQQPQPPPSQ) are enriched in pro residues. Composition is skewed to low complexity over residues 285–294 (ALPQQLQQMH) and 309–329 (PVAQ…PLVS). Asymmetric dimethylarginine is present on arginine 349. Residues 412-530 (SSSIPLGRQP…PAGSSQAEEQ (119 aa)) are disordered. Residues 426–446 (SQSSLPMLSSPSPGQQVQTPQ) show a composition bias toward low complexity. Residues 447 to 459 (SMPPPPQPSPQPG) are compositionally biased toward pro residues. Residues 460 to 482 (QPSSQPNSNVSSGPAPSPSSFLP) show a composition bias toward low complexity. Composition is skewed to polar residues over residues 493-503 (VTARTPQNFSV) and 511-529 (TPVN…QAEE). The Nuclear localization signal motif lies at 547-564 (RRMINKIDKNEDRKKDLS). Threonine 603 is modified (phosphothreonine).

The protein belongs to the Mediator complex subunit 15 family. In terms of assembly, component of the Mediator complex, which is composed of MED1, MED4, MED6, MED7, MED8, MED9, MED10, MED11, MED12, MED13, MED13L, MED14, MED15, MED16, MED17, MED18, MED19, MED20, MED21, MED22, MED23, MED24, MED25, MED26, MED27, MED29, MED30, MED31, CCNC, CDK8 and CDC2L6/CDK11. The MED12, MED13, CCNC and CDK8 subunits form a distinct module termed the CDK8 module. Mediator containing the CDK8 module is less active than Mediator lacking this module in supporting transcriptional activation. Individual preparations of the Mediator complex lacking one or more distinct subunits have been variously termed ARC, CRSP, DRIP, PC2, SMCC and TRAP. Interacts with SMAD2, SMAD3, SREBF1 and SREBF2. Interacts with WWTR1. Interacts with TRIM11. Post-translationally, ubiquitinated by TRIM11, leading to proteasomal degradation. In terms of tissue distribution, expressed in all tissues examined, including heart, brain, lung, spleen, thymus, pancreas, blood leukocyte and placenta. However, the level of expression varied, with highest expression in the placenta and peripheral blood and lowest in the pancreas and kidney.

It is found in the cytoplasm. Its subcellular location is the nucleus. Component of the Mediator complex, a coactivator involved in the regulated transcription of nearly all RNA polymerase II-dependent genes. Mediator functions as a bridge to convey information from gene-specific regulatory proteins to the basal RNA polymerase II transcription machinery. Mediator is recruited to promoters by direct interactions with regulatory proteins and serves as a scaffold for the assembly of a functional preinitiation complex with RNA polymerase II and the general transcription factors. Required for cholesterol-dependent gene regulation. Positively regulates the Nodal signaling pathway. This Homo sapiens (Human) protein is Mediator of RNA polymerase II transcription subunit 15 (MED15).